A 420-amino-acid chain; its full sequence is Glutamate-1-semialdehyde 2,1-aminomutase (420 aa).

The residue at position 259 (Lys-259) is an N6-(pyridoxal phosphate)lysine.

It belongs to the class-III pyridoxal-phosphate-dependent aminotransferase family. HemL subfamily. Pyridoxal 5'-phosphate serves as cofactor.

The protein localises to the cytoplasm. It catalyses the reaction (S)-4-amino-5-oxopentanoate = 5-aminolevulinate. The protein operates within porphyrin-containing compound metabolism; protoporphyrin-IX biosynthesis; 5-aminolevulinate from L-glutamyl-tRNA(Glu): step 2/2. The polypeptide is Glutamate-1-semialdehyde 2,1-aminomutase (Sulfolobus acidocaldarius (strain ATCC 33909 / DSM 639 / JCM 8929 / NBRC 15157 / NCIMB 11770)).